We begin with the raw amino-acid sequence, 238 residues long: MTDTAENQTQNNWQAEHPRSIRSFVLRQSHMTAAQQRAIDTLWGSFGIDYQATPADLDARFGSSRPKILEIGFGMGTATAEIARRLPETDFLAIDVHGPGVGNLLKLIEENHLENIRVMRHDAVEVVENMLQDGSLDGIHIFFPDPWHKKRHHKRRLIQAPFIAKLLPKLKTGGYIHLATDWEEYAQQMLEVLSSFDSLQNTAADYAPTPDYRPETKFEARGKRLGHGVWDLVFKRIG.

4 residues coordinate S-adenosyl-L-methionine: E70, D95, D122, and D145. The active site involves D145. Substrate-binding positions include K149, D181, and 216–219; that span reads TKFE.

This sequence belongs to the class I-like SAM-binding methyltransferase superfamily. TrmB family.

The catalysed reaction is guanosine(46) in tRNA + S-adenosyl-L-methionine = N(7)-methylguanosine(46) in tRNA + S-adenosyl-L-homocysteine. It participates in tRNA modification; N(7)-methylguanine-tRNA biosynthesis. Functionally, catalyzes the formation of N(7)-methylguanine at position 46 (m7G46) in tRNA. The polypeptide is tRNA (guanine-N(7)-)-methyltransferase (Neisseria meningitidis serogroup A / serotype 4A (strain DSM 15465 / Z2491)).